Reading from the N-terminus, the 143-residue chain is ATP synthase subunit b' (143 aa).

Residues 6 to 26 (ATLPLMALQFVLLAIILNAIF) form a helical membrane-spanning segment.

Belongs to the ATPase B chain family. F-type ATPases have 2 components, F(1) - the catalytic core - and F(0) - the membrane proton channel. F(1) has five subunits: alpha(3), beta(3), gamma(1), delta(1), epsilon(1). F(0) has four main subunits: a(1), b(1), b'(1) and c(10-14). The alpha and beta chains form an alternating ring which encloses part of the gamma chain. F(1) is attached to F(0) by a central stalk formed by the gamma and epsilon chains, while a peripheral stalk is formed by the delta, b and b' chains.

The protein resides in the cellular thylakoid membrane. Functionally, f(1)F(0) ATP synthase produces ATP from ADP in the presence of a proton or sodium gradient. F-type ATPases consist of two structural domains, F(1) containing the extramembraneous catalytic core and F(0) containing the membrane proton channel, linked together by a central stalk and a peripheral stalk. During catalysis, ATP synthesis in the catalytic domain of F(1) is coupled via a rotary mechanism of the central stalk subunits to proton translocation. Its function is as follows. Component of the F(0) channel, it forms part of the peripheral stalk, linking F(1) to F(0). The b'-subunit is a diverged and duplicated form of b found in plants and photosynthetic bacteria. This is ATP synthase subunit b' from Crocosphaera subtropica (strain ATCC 51142 / BH68) (Cyanothece sp. (strain ATCC 51142)).